Reading from the N-terminus, the 1064-residue chain is Alpha-aminoadipic semialdehyde synthase (1064 aa).

Residues 24–445 (VNKWERRTPL…RACISYRGEL (422 aa)) form a lysine-ketoglutarate reductase region. The residue at position 238 (Thr238) is a Phosphothreonine. Ser458 bears the Phosphoserine mark. The interval 583 to 1064 (MTKKSGVLIL…YGIKLMEKAE (482 aa)) is saccharopine dehydrogenase. L-saccharopine contacts are provided by residues 703-704 (SY), Asp730, Arg830, and 852-854 (TLR). NADP(+) is bound at residue 729 to 731 (LDP).

The protein in the N-terminal section; belongs to the AlaDH/PNT family. This sequence in the C-terminal section; belongs to the saccharopine dehydrogenase family. Homodimer. Post-translationally, phosphorylation of Ser-458 seems important for the LKR activity. In terms of tissue distribution, ubiquitous, with higher levels in flowers. Isoform Long is mostly present in young leaves, cotyledons, root tips and mature root parts. Whereas isoform Short is mostly expressed in cotyledons and at low levels in all root parts.

The protein localises to the cytoplasm. It catalyses the reaction L-saccharopine + NADP(+) + H2O = L-lysine + 2-oxoglutarate + NADPH + H(+). It carries out the reaction L-saccharopine + NAD(+) + H2O = (S)-2-amino-6-oxohexanoate + L-glutamate + NADH + H(+). The protein operates within amino-acid degradation; L-lysine degradation via saccharopine pathway; glutaryl-CoA from L-lysine: step 1/6. It functions in the pathway amino-acid degradation; L-lysine degradation via saccharopine pathway; glutaryl-CoA from L-lysine: step 2/6. Its activity is regulated as follows. The LKR activity is stimulated by NaCl. Its function is as follows. Bifunctional enzyme that catalyzes the first two steps in lysine degradation. The N-terminal and the C-terminal contain lysine-oxoglutarate reductase and saccharopine dehydrogenase activity, respectively. Negatively regulates free Lys accumulation in seeds. This is Alpha-aminoadipic semialdehyde synthase (LKR/SDH) from Arabidopsis thaliana (Mouse-ear cress).